A 354-amino-acid polypeptide reads, in one-letter code: CX3C chemokine receptor 1 (354 aa).

Residues 1–32 (MSTSFPELDLENFEYDDSAEACYLGDIVAFGT) are Extracellular-facing. Residues 33-60 (IFLSVFYALVFTFGLVGNLLVVLALTNS) traverse the membrane as a helical segment. The Cytoplasmic segment spans residues 61–70 (RKPKSITDIY). A helical membrane pass occupies residues 71-91 (LLNLALSDLLFVATLPFWTHY). At 92–104 (LISHEGLHNAMCK) the chain is on the extracellular side. Cysteines 103 and 176 form a disulfide. The chain crosses the membrane as a helical span at residues 105–126 (LTTAFFFIGFFGGIFFITVISI). Over 127–143 (DRYLAIVLAANSMNNRT) the chain is Cytoplasmic. A helical transmembrane segment spans residues 144-168 (VQHGVTISLGVWAAAILVASPQFMF). The Extracellular segment spans residues 169–196 (TKRKDNECLGDYPEVLQEMWPVLRNSEV). The chain crosses the membrane as a helical span at residues 197–216 (NILGFALPLLIMSFCYFRII). Residues 217–232 (QTLFSCKNRKKARAVR) are Cytoplasmic-facing. The helical transmembrane segment at 233 to 257 (LILLVVFAFFLFWTPYNIMIFLETL) threads the bilayer. The Extracellular segment spans residues 258-274 (KFYNFFPSCDMKRDLRL). A helical transmembrane segment spans residues 275-298 (ALSVTETVAFSHCCLNPFIYAFAG). Residues 299–354 (EKFRRYLGHLYRKCLAVLCGHPVHTGFSPESQRSRQDSILSSFTHYTSEGDGSLLL) lie on the Cytoplasmic side of the membrane. A Phosphothreonine modification is found at Thr345.

The protein belongs to the G-protein coupled receptor 1 family. In terms of assembly, found in a ternary complex with CX3CL1 and ITGAV:ITGB3 or ITGA4:ITGB1. Post-translationally, this protein is not N-glycosylated which is unusual for G-protein-coupled receptors. As to expression, specifically expressed in subsets of leukocytes: expressed in monocytes, subsets of T-cells and natural killer (NK) cells in the circulation, dendritic cells, as well as in microglia in the central nervous system (CNS). Expression level subdivides blood monocytes into two major functional subsets; CD14(+)CD16(-)-CX3CR1(low) inflammatory monocytes and CD14(low)CD16(+)CX3CR1(high) homeostatic monocytes. Expressed in myeloid-derived mucosal dendritic cells, which populate the entire lamina propria of the small intestine.

It is found in the cell membrane. In terms of biological role, receptor for the C-X3-C chemokine fractalkine (CX3CL1) present on many early leukocyte cells; CX3CR1-CX3CL1 signaling exerts distinct functions in different tissue compartments, such as immune response, inflammation, cell adhesion and chemotaxis. CX3CR1-CX3CL1 signaling mediates cell migratory functions. Responsible for the recruitment of natural killer (NK) cells to inflamed tissues. Acts as a regulator of inflammation process leading to atherogenesis by mediating macrophage and monocyte recruitment to inflamed atherosclerotic plaques, promoting cell survival. Involved in airway inflammation by promoting interleukin 2-producing T helper (Th2) cell survival in inflamed lung. Involved in the migration of circulating monocytes to non-inflamed tissues, where they differentiate into macrophages and dendritic cells. Acts as a negative regulator of angiogenesis, probably by promoting macrophage chemotaxis. Plays a key role in brain microglia by regulating inflammatory response in the central nervous system (CNS) and regulating synapse maturation. Required to restrain the microglial inflammatory response in the CNS and the resulting parenchymal damage in response to pathological stimuli. Involved in brain development by participating in synaptic pruning, a natural process during which brain microglia eliminates extra synapses during postnatal development. Synaptic pruning by microglia is required to promote the maturation of circuit connectivity during brain development. Acts as an important regulator of the gut microbiota by controlling immunity to intestinal bacteria and fungi. Expressed in lamina propria dendritic cells in the small intestine, which form transepithelial dendrites capable of taking up bacteria in order to provide defense against pathogenic bacteria. Required to initiate innate and adaptive immune responses against dissemination of commensal fungi (mycobiota) component of the gut: expressed in mononuclear phagocytes (MNPs) and acts by promoting induction of antifungal IgG antibodies response to confer protection against disseminated C.albicans or C.auris infection. Also acts as a receptor for C-C motif chemokine CCL26, inducing cell chemotaxis. The polypeptide is CX3C chemokine receptor 1 (Mus musculus (Mouse)).